A 237-amino-acid chain; its full sequence is Aliphatic sulfonates import ATP-binding protein SsuB 1 (237 aa).

The region spanning 5-221 (LMDIRVEHKA…PRDRRDPLLA (217 aa)) is the ABC transporter domain. 38–45 (GPSGCGKS) contacts ATP.

This sequence belongs to the ABC transporter superfamily. Aliphatic sulfonates importer (TC 3.A.1.17.2) family. As to quaternary structure, the complex is composed of two ATP-binding proteins (SsuB), two transmembrane proteins (SsuC) and a solute-binding protein (SsuA).

Its subcellular location is the cell inner membrane. The catalysed reaction is ATP + H2O + aliphatic sulfonate-[sulfonate-binding protein]Side 1 = ADP + phosphate + aliphatic sulfonateSide 2 + [sulfonate-binding protein]Side 1.. Part of the ABC transporter complex SsuABC involved in aliphatic sulfonates import. Responsible for energy coupling to the transport system. The protein is Aliphatic sulfonates import ATP-binding protein SsuB 1 of Pseudomonas syringae pv. syringae (strain B728a).